The following is a 369-amino-acid chain: sn-glycerol-3-phosphate import ATP-binding protein UgpC 1 (369 aa).

Residues 4–234 (ISIRGVKKNY…PVSRFVAGFV (231 aa)) form the ABC transporter domain. Residue 36 to 43 (GPSGCGKS) participates in ATP binding.

The protein belongs to the ABC transporter superfamily. sn-glycerol-3-phosphate importer (TC 3.A.1.1.3) family. In terms of assembly, the complex is composed of two ATP-binding proteins (UgpC), two transmembrane proteins (UgpA and UgpE) and a solute-binding protein (UgpB).

The protein resides in the cell inner membrane. The catalysed reaction is sn-glycerol 3-phosphate(out) + ATP + H2O = sn-glycerol 3-phosphate(in) + ADP + phosphate + H(+). In terms of biological role, part of the ABC transporter complex UgpBAEC involved in sn-glycerol-3-phosphate (G3P) import. Responsible for energy coupling to the transport system. This chain is sn-glycerol-3-phosphate import ATP-binding protein UgpC 1, found in Rhizobium johnstonii (strain DSM 114642 / LMG 32736 / 3841) (Rhizobium leguminosarum bv. viciae).